Reading from the N-terminus, the 296-residue chain is Ribosomal RNA small subunit methyltransferase H (296 aa).

S-adenosyl-L-methionine contacts are provided by residues 41-43 (GGH), Asp-60, Phe-87, Asp-103, and Gln-110.

Belongs to the methyltransferase superfamily. RsmH family.

It localises to the cytoplasm. It carries out the reaction cytidine(1402) in 16S rRNA + S-adenosyl-L-methionine = N(4)-methylcytidine(1402) in 16S rRNA + S-adenosyl-L-homocysteine + H(+). In terms of biological role, specifically methylates the N4 position of cytidine in position 1402 (C1402) of 16S rRNA. This chain is Ribosomal RNA small subunit methyltransferase H, found in Synechococcus elongatus (strain ATCC 33912 / PCC 7942 / FACHB-805) (Anacystis nidulans R2).